The primary structure comprises 426 residues: Probable M18 family aminopeptidase 2 (426 aa).

H79, H156, and H399 together coordinate Zn(2+).

The protein belongs to the peptidase M18 family. Zn(2+) is required as a cofactor.

The chain is Probable M18 family aminopeptidase 2 (apeB) from Mycobacterium leprae (strain TN).